We begin with the raw amino-acid sequence, 490 residues long: Cytochrome P450 monooxygenase anuE (490 aa).

Residue Cys405 participates in heme binding.

It belongs to the cytochrome P450 family. Heme is required as a cofactor.

The enzyme catalyses 2-hydroxymethyl-3-pentylphenol + reduced [NADPH--hemoprotein reductase] + O2 = (8S)-annullatin E + oxidized [NADPH--hemoprotein reductase] + H2O + H(+). It participates in secondary metabolite biosynthesis. Cytochrome P450 monooxygenase; part of the gene cluster that mediates the biosynthesis of annullatin D, an alkylated aromatic polyketide with a fused dihydrobenzofuran lactone ring system that exhibits potent agonistic activities toward the cannabinoid receptors. Within the pathway, anuE catalyzes the hydroxylation of 2-hydroxymethyl-3-pentylphenol at the side chain to produce (8S)-annullatin E. The annullatin backbone 2-hydroxymethyl-3-pentylphenol is assembled from one acetyl-CoA starter unit and 5 malonyl-CoA elongation units by cooperation of the highly reducing polyketide synthase anuA, the short-chain dehydrogenase anuB and the oxidoreductase anuC, before being hydroxylated at the C-5 alkyl chain by the cytochrome P450 monooxygenase anuE to form (8S)-annullatin E. The prenyltransferase anuH subsequently installs one isoprenyl group at the benzene ring to form (8S)-annullatin J. Enzymatic or nonenzymatic dihydro-benzofuran ring formation between the prenyl and the phenolic hydroxyl groups in (8S)-annullatin J results in two diastereomers (2S,9S)-annullatin H and compound 12. The intermediate (2S,9S)-annullatin H is then converted to (2S,9S)-annullatin D by the FAD-linked oxidoreductase anuG-catalyzed five-member lactone ring formation. The isomer 12 acts as a substrate for the short-chain dehydrogenase anuF and is oxidized to (2R)-annullatin F, which is subsequently acetylated by an acetyltransferase leading to (2R)-annullatin G formation. The remaining enzymes identified within the cluster, anuD, anuI and anuJ, seem not to be involved in annullatin biosynthesis. In Penicillium roqueforti (strain FM164), this protein is Cytochrome P450 monooxygenase anuE.